Reading from the N-terminus, the 383-residue chain is Probable butyrate kinase (383 aa).

Belongs to the acetokinase family.

It is found in the cytoplasm. It carries out the reaction butanoate + ATP = butanoyl phosphate + ADP. The chain is Probable butyrate kinase from Deinococcus radiodurans (strain ATCC 13939 / DSM 20539 / JCM 16871 / CCUG 27074 / LMG 4051 / NBRC 15346 / NCIMB 9279 / VKM B-1422 / R1).